The sequence spans 72 residues: Subtilisin-chymotrypsin inhibitor-2B (72 aa).

The protein belongs to the protease inhibitor I13 (potato type I serine protease inhibitor) family.

Its function is as follows. Inhibits both subtilisin and chymotrypsin. This Hordeum vulgare (Barley) protein is Subtilisin-chymotrypsin inhibitor-2B.